A 313-amino-acid chain; its full sequence is Olfactory receptor 1J4 (313 aa).

Residues 1 to 25 (MKRENQSSVSEFLLLDLPIWPEQQA) lie on the Extracellular side of the membrane. Asn5 is a glycosylation site (N-linked (GlcNAc...) asparagine). The chain crosses the membrane as a helical span at residues 26–49 (VFFTLFLGMYLITVLGNLLIILLI). The Cytoplasmic portion of the chain corresponds to 50 to 57 (RLDSHLHT). Residues 58–79 (PMFFFLSHLALTDISLSSVTVP) form a helical membrane-spanning segment. Topologically, residues 80 to 100 (KMLLSMQTQDQSILYAGCVTQ) are extracellular. Cys97 and Cys189 are disulfide-bonded. Residues 101 to 120 (MYFFIFFTDLDNFLLTSMAY) form a helical membrane-spanning segment. The Cytoplasmic segment spans residues 121–139 (DRYVAICHPLRYTTIMKEG). Residues 140–158 (LCNLLVTVSWILSCTNALS) traverse the membrane as a helical segment. At 159 to 195 (HTLLLAQLSFCADNTIPHFFCDLVALLKLSCSDISLN) the chain is on the extracellular side. The chain crosses the membrane as a helical span at residues 196 to 219 (ELVIFTVGQAVITLPLICILISYG). Residues 220–236 (HIGVTILKAPSTKGIFK) lie on the Cytoplasmic side of the membrane. The chain crosses the membrane as a helical span at residues 237 to 259 (ALSTCGSHLSVVSLYYGTIIGLY). Over 260 to 272 (FLPSSSASSDKDV) the chain is Extracellular. The chain crosses the membrane as a helical span at residues 273–292 (IASVMYTVITPLLNPFIYSL). At 293 to 313 (RNRDIKGALERLFNRATVLSQ) the chain is on the cytoplasmic side.

The protein belongs to the G-protein coupled receptor 1 family.

The protein localises to the cell membrane. Odorant receptor. In Homo sapiens (Human), this protein is Olfactory receptor 1J4 (OR1J4).